The following is a 326-amino-acid chain: Endo-beta-1,4-glucanase A (326 aa).

Residues 1–19 (MRSLVLLSSVLALVAPSKG) form the signal peptide. E150 serves as the catalytic Proton donor. E257 acts as the Nucleophile in catalysis.

The protein belongs to the glycosyl hydrolase 5 (cellulase A) family.

It is found in the secreted. It carries out the reaction Endohydrolysis of (1-&gt;4)-beta-D-glucosidic linkages in cellulose, lichenin and cereal beta-D-glucans.. Has endoglucanase activity on substrates containing beta-1,4 glycosidic bonds, like in carboxymethylcellulose (CMC), hydroxyethylcellulose (HEC) and beta-glucan. Involved in the degradation of complex natural cellulosic substrates. In Emericella nidulans (strain FGSC A4 / ATCC 38163 / CBS 112.46 / NRRL 194 / M139) (Aspergillus nidulans), this protein is Endo-beta-1,4-glucanase A (eglA).